The following is a 172-amino-acid chain: Scytalone dehydratase (172 aa).

Residues tyrosine 30, tyrosine 50, and phenylalanine 53 each contribute to the substrate site. Catalysis depends on residues histidine 85 and histidine 110. Substrate is bound at residue asparagine 131.

It belongs to the scytalone dehydratase family. Homotrimer. Each subunit contains an active site, located in the central part of the hydrophobic core of the monomer, which functions independently.

The protein localises to the endosome. It carries out the reaction scytalone = 1,3,8-trihydroxynaphthalene + H2O. The protein operates within pigment biosynthesis; melanin biosynthesis. Its activity is regulated as follows. (N-phenoxypropyl)-carboxamides such as carpropamid and derivatives of norephedrine act as inhibitors of scytalone dehydratase activity. Its function is as follows. Scytalone dehydratase; part of the gene cluster that mediates the biosynthesis of dihydroxynaphthalene melanin, a bluish-green pigment and a structural component of the conidial wall. Within the pathway, catalyzes the dehydration of scytalone as well as of vermelone. Is also able to dehydrate the alternate substrate 2,3-dihydro-2,5-dihydroxy-4H-benzopyran-4-one (DDBO) to 5-hydroxy-4H-1-benzopyran-4-one (HBO). The sequence is that of Scytalone dehydratase (SDH1) from Pyricularia oryzae (strain 70-15 / ATCC MYA-4617 / FGSC 8958) (Rice blast fungus).